The chain runs to 594 residues: (E)-beta-ocimene synthase TPS6FN (594 aa).

Residues Arg303, Asp340, Asp344, Arg489, and Asn492 each contribute to the (2E)-geranyl diphosphate site. Mg(2+) is bound by residues Asp340 and Asp344. Residues 340 to 344 (DDIYD) carry the DDXXD motif motif. Mg(2+) contacts are provided by Asn492, Thr496, and Glu500.

The protein belongs to the terpene synthase family. Tpsb subfamily. It depends on Mg(2+) as a cofactor. The cofactor is Mn(2+). As to expression, expressed in glandular trichomes two to four weeks after flowering onset.

It catalyses the reaction (2E)-geranyl diphosphate = (E)-beta-ocimene + diphosphate. The enzyme catalyses (2E)-geranyl diphosphate = (Z)-beta-ocimene + diphosphate. It participates in secondary metabolite biosynthesis; terpenoid biosynthesis. Involved in monoterpene (C10) olefins biosynthesis, constituants of cannabinoids and terpenoids-rich resins. Catalyzes mainly the conversion of (2E)-geranyl diphosphate to (E)-beta-ocimene, and also produces minor products such as (Z)-beta-ocimene. This is (E)-beta-ocimene synthase TPS6FN from Cannabis sativa (Hemp).